The sequence spans 122 residues: Large ribosomal subunit protein uL14 (122 aa).

This sequence belongs to the universal ribosomal protein uL14 family. In terms of assembly, part of the 50S ribosomal subunit. Forms a cluster with proteins L3 and L19. In the 70S ribosome, L14 and L19 interact and together make contacts with the 16S rRNA in bridges B5 and B8. Interacts with ribosomal silencing factor RsfS, which may inhibit ribosomal subunit association.

Its function is as follows. Binds to 23S rRNA. Forms part of two intersubunit bridges in the 70S ribosome. The sequence is that of Large ribosomal subunit protein uL14 from Treponema pallidum (strain Nichols).